A 68-amino-acid polypeptide reads, in one-letter code: Large ribosomal subunit protein bL35 (68 aa).

This sequence belongs to the bacterial ribosomal protein bL35 family.

This is Large ribosomal subunit protein bL35 from Pelagibacter ubique (strain HTCC1062).